The following is a 255-amino-acid chain: 5'-nucleotidase SurE (255 aa).

A divalent metal cation-binding residues include D8, D9, S40, and N92.

Belongs to the SurE nucleotidase family. Requires a divalent metal cation as cofactor.

The protein localises to the cytoplasm. It catalyses the reaction a ribonucleoside 5'-phosphate + H2O = a ribonucleoside + phosphate. Nucleotidase that shows phosphatase activity on nucleoside 5'-monophosphates. The chain is 5'-nucleotidase SurE from Brucella suis (strain ATCC 23445 / NCTC 10510).